Reading from the N-terminus, the 191-residue chain is Glycerol-3-phosphate acyltransferase (191 aa).

Transmembrane regions (helical) follow at residues 5-25 (IILILSYVIGSIPFSLIIAKI), 51-71 (LAVLALFLDSLKGFVAVYTAQ), 78-98 (DLYIYVSAILAVLGHMFPIWL), 114-134 (IALNISIALAFVFVWLIVFFI), and 153-173 (SFFFQKELFLILLTVAILIFL).

Belongs to the PlsY family. As to quaternary structure, probably interacts with PlsX.

It is found in the cell membrane. The enzyme catalyses an acyl phosphate + sn-glycerol 3-phosphate = a 1-acyl-sn-glycero-3-phosphate + phosphate. Its pathway is lipid metabolism; phospholipid metabolism. In terms of biological role, catalyzes the transfer of an acyl group from acyl-phosphate (acyl-PO(4)) to glycerol-3-phosphate (G3P) to form lysophosphatidic acid (LPA). This enzyme utilizes acyl-phosphate as fatty acyl donor, but not acyl-CoA or acyl-ACP. The polypeptide is Glycerol-3-phosphate acyltransferase (Wolbachia pipientis subsp. Culex pipiens (strain wPip)).